Consider the following 349-residue polypeptide: Nicotinate-nucleotide--dimethylbenzimidazole phosphoribosyltransferase (349 aa).

Glutamate 318 serves as the catalytic Proton acceptor.

The protein belongs to the CobT family.

The enzyme catalyses 5,6-dimethylbenzimidazole + nicotinate beta-D-ribonucleotide = alpha-ribazole 5'-phosphate + nicotinate + H(+). The protein operates within nucleoside biosynthesis; alpha-ribazole biosynthesis; alpha-ribazole from 5,6-dimethylbenzimidazole: step 1/2. Its function is as follows. Catalyzes the synthesis of alpha-ribazole-5'-phosphate from nicotinate mononucleotide (NAMN) and 5,6-dimethylbenzimidazole (DMB). The sequence is that of Nicotinate-nucleotide--dimethylbenzimidazole phosphoribosyltransferase from Alkaliphilus metalliredigens (strain QYMF).